The following is a 702-amino-acid chain: Rho GTPase-activating protein 22 (702 aa).

One can recognise a PH domain in the interval 43–151 (PVLKAGWLRK…WVQAIRRVIW (109 aa)). The Rho-GAP domain occupies 161–355 (QRLEDTVHHE…VLIRKHGQLF (195 aa)). Disordered stretches follow at residues 360–433 (LEEP…HTLP), 438–457 (SFRQ…SSLE), 480–511 (RASS…FSST), and 555–596 (PSPL…TQAH). S365 and S397 each carry phosphoserine. Polar residues-rich tracts occupy residues 407–421 (SRTS…TGPA), 438–456 (SFRQ…NSSL), 491–504 (GSAQ…NVPP), and 581–594 (SGSS…SPTQ). The stretch at 594–691 (QAHVRRCRAL…EEFFSTLGSL (98 aa)) forms a coiled coil.

Interacts with VEZF1. As to expression, predominantly present in endothelial cells (at protein level).

The protein resides in the cytoplasm. Its subcellular location is the nucleus. Its function is as follows. Rho GTPase-activating protein involved in the signal transduction pathway that regulates endothelial cell capillary tube formation during angiogenesis. Acts as a GTPase activator for the RAC1 by converting it to an inactive GDP-bound state. Inhibits RAC1-dependent lamellipodia formation. May also play a role in transcription regulation via its interaction with VEZF1, by regulating activity of the endothelin-1 (EDN1) promoter. In Mus musculus (Mouse), this protein is Rho GTPase-activating protein 22 (Arhgap22).